The sequence spans 137 residues: Small ribosomal subunit protein bS6 (137 aa).

The interval 96–137 (ITEASPMAKAKDERDTRRSSEERAPRAEATEEAEESAENTAE) is disordered. Over residues 104–124 (KAKDERDTRRSSEERAPRAEA) the composition is skewed to basic and acidic residues. Residues 125-137 (TEEAEESAENTAE) are compositionally biased toward acidic residues.

This sequence belongs to the bacterial ribosomal protein bS6 family.

Its function is as follows. Binds together with bS18 to 16S ribosomal RNA. This Shewanella pealeana (strain ATCC 700345 / ANG-SQ1) protein is Small ribosomal subunit protein bS6.